The sequence spans 139 residues: Large ribosomal subunit protein bL21 (139 aa).

Belongs to the bacterial ribosomal protein bL21 family. In terms of assembly, part of the 50S ribosomal subunit. Contacts protein L20.

Its function is as follows. This protein binds to 23S rRNA in the presence of protein L20. The chain is Large ribosomal subunit protein bL21 from Prochlorococcus marinus (strain NATL1A).